The chain runs to 361 residues: 5-formaminoimidazole-4-carboxamide-1-(beta)-D-ribofuranosyl 5'-monophosphate synthetase (361 aa).

The 5-amino-1-(5-phospho-beta-D-ribosyl)imidazole-4-carboxamide site is built by His27 and Ser94. The ATP-grasp domain maps to 116–348; sequence RAILRWEAER…MGQRIAKEIK (233 aa). ATP is bound by residues 146 to 208 and Glu230; that span reads PDEI…ANYC. Residue Asn258 participates in 5-amino-1-(5-phospho-beta-D-ribosyl)imidazole-4-carboxamide binding. 2 residues coordinate Mg(2+): Gln297 and Glu310.

This sequence belongs to the phosphohexose mutase family. Mg(2+) serves as cofactor. The cofactor is Mn(2+).

It catalyses the reaction 5-amino-1-(5-phospho-beta-D-ribosyl)imidazole-4-carboxamide + formate + ATP = 5-formamido-1-(5-phospho-D-ribosyl)imidazole-4-carboxamide + ADP + phosphate. The protein operates within purine metabolism; IMP biosynthesis via de novo pathway; 5-formamido-1-(5-phospho-D-ribosyl)imidazole-4-carboxamide from 5-amino-1-(5-phospho-D-ribosyl)imidazole-4-carboxamide (formate route): step 1/1. Its function is as follows. Catalyzes the ATP- and formate-dependent formylation of 5-aminoimidazole-4-carboxamide-1-beta-d-ribofuranosyl 5'-monophosphate (AICAR) to 5-formaminoimidazole-4-carboxamide-1-beta-d-ribofuranosyl 5'-monophosphate (FAICAR) in the absence of folates. This is 5-formaminoimidazole-4-carboxamide-1-(beta)-D-ribofuranosyl 5'-monophosphate synthetase from Methanococcus vannielii (strain ATCC 35089 / DSM 1224 / JCM 13029 / OCM 148 / SB).